Reading from the N-terminus, the 346-residue chain is Hydroxycarboxylic acid receptor 1 (346 aa).

The Extracellular portion of the chain corresponds to M1–L21. N3 is a glycosylation site (N-linked (GlcNAc...) asparagine). A helical membrane pass occupies residues L22–F42. At H43–P49 the chain is on the cytoplasmic side. The chain crosses the membrane as a helical span at residues S50–F70. Residues R71 to R89 are Extracellular-facing. C88 and C165 are disulfide-bonded. Residues V90 to A110 traverse the membrane as a helical segment. Residues A111–R130 lie on the Cytoplasmic side of the membrane. A helical membrane pass occupies residues V131–L151. Topologically, residues L152–Q182 are extracellular. Residues L183–L203 form a helical membrane-spanning segment. Residues R204–R220 lie on the Cytoplasmic side of the membrane. Residues F221–L241 form a helical membrane-spanning segment. Residues Y242 to H261 lie on the Extracellular side of the membrane. Residues I262–S281 form a helical membrane-spanning segment. The Cytoplasmic segment spans residues S282–H346.

The protein belongs to the G-protein coupled receptor 1 family. In terms of tissue distribution, expressed abundantly in brown and white fat. It also detectable at lower levels in liver, kidney, skeletal muscle, brain and pituitary. Not detected in frontal, temporal and occipital lobes of the cortex, basal forebrain, caudate nucleus, nucleus accumbens and hippocampus.

It localises to the cell membrane. Acts as a receptor for L-lactate and mediates its anti-lipolytic effect through a G(i)-protein-mediated pathway. In Homo sapiens (Human), this protein is Hydroxycarboxylic acid receptor 1 (HCAR1).